The following is a 1058-amino-acid chain: Carbamoyl phosphate synthase large chain (1058 aa).

A carboxyphosphate synthetic domain region spans residues 1-401; the sequence is MPKRKDIQKI…SLLKACRSLE (401 aa). Residues Arg-129, Arg-169, Gly-175, Gly-176, Arg-208, Ile-210, Glu-215, Gly-241, Ile-242, His-243, Gln-284, and Glu-298 each coordinate ATP. The region spanning 133-327 is the ATP-grasp 1 domain; that stretch reads KQLMQELDQP…IAKLAAKIAV (195 aa). Mg(2+)-binding residues include Gln-284, Glu-298, and Asn-300. The Mn(2+) site is built by Gln-284, Glu-298, and Asn-300. Residues 402-546 are oligomerization domain; the sequence is IGVCHNEMTS…YSTYELENES (145 aa). The tract at residues 547–929 is carbamoyl phosphate synthetic domain; that stretch reads VQSNKESILV…ALYKAFEANN (383 aa). Residues 671–861 enclose the ATP-grasp 2 domain; that stretch reads EKALKELGIP…MAQIATKLIL (191 aa). Arg-707, Ser-746, Ile-748, Glu-752, Gly-777, Val-778, His-779, Ser-780, Gln-820, and Glu-832 together coordinate ATP. Positions 820, 832, and 834 each coordinate Mg(2+). Residues Gln-820, Glu-832, and Asn-834 each contribute to the Mn(2+) site. The region spanning 930–1058 is the MGS-like domain; the sequence is SHLSEFGQIV…ESRCFNIEAI (129 aa). Residues 930–1058 are allosteric domain; the sequence is SHLSEFGQIV…ESRCFNIEAI (129 aa).

This sequence belongs to the CarB family. In terms of assembly, composed of two chains; the small (or glutamine) chain promotes the hydrolysis of glutamine to ammonia, which is used by the large (or ammonia) chain to synthesize carbamoyl phosphate. Tetramer of heterodimers (alpha,beta)4. Mg(2+) is required as a cofactor. It depends on Mn(2+) as a cofactor.

The enzyme catalyses hydrogencarbonate + L-glutamine + 2 ATP + H2O = carbamoyl phosphate + L-glutamate + 2 ADP + phosphate + 2 H(+). It catalyses the reaction hydrogencarbonate + NH4(+) + 2 ATP = carbamoyl phosphate + 2 ADP + phosphate + 2 H(+). Its pathway is amino-acid biosynthesis; L-arginine biosynthesis; carbamoyl phosphate from bicarbonate: step 1/1. The protein operates within pyrimidine metabolism; UMP biosynthesis via de novo pathway; (S)-dihydroorotate from bicarbonate: step 1/3. Functionally, large subunit of the glutamine-dependent carbamoyl phosphate synthetase (CPSase). CPSase catalyzes the formation of carbamoyl phosphate from the ammonia moiety of glutamine, carbonate, and phosphate donated by ATP, constituting the first step of 2 biosynthetic pathways, one leading to arginine and/or urea and the other to pyrimidine nucleotides. The large subunit (synthetase) binds the substrates ammonia (free or transferred from glutamine from the small subunit), hydrogencarbonate and ATP and carries out an ATP-coupled ligase reaction, activating hydrogencarbonate by forming carboxy phosphate which reacts with ammonia to form carbamoyl phosphate. In Streptococcus pyogenes serotype M1, this protein is Carbamoyl phosphate synthase large chain.